The primary structure comprises 99 residues: DNA-directed RNA polymerase subunit omega (99 aa).

It belongs to the RNA polymerase subunit omega family. The RNAP catalytic core consists of 2 alpha, 1 beta, 1 beta' and 1 omega subunit. When a sigma factor is associated with the core the holoenzyme is formed, which can initiate transcription.

It catalyses the reaction RNA(n) + a ribonucleoside 5'-triphosphate = RNA(n+1) + diphosphate. In terms of biological role, promotes RNA polymerase assembly. Latches the N- and C-terminal regions of the beta' subunit thereby facilitating its interaction with the beta and alpha subunits. The chain is DNA-directed RNA polymerase subunit omega from Stenotrophomonas maltophilia (strain K279a).